The sequence spans 258 residues: C1q-related factor (258 aa).

Residues 1–16 (MLLVLVVLIPVLVSSG) form the signal peptide. The segment at 39 to 117 (GPGAGARTDG…PGLPGAGGSG (79 aa)) is disordered. A compositionally biased stretch (low complexity) spans 67–77 (GPQGKPGRTGK). Positions 67–115 (GPQGKPGRTGKPGPPGPPGDPGPPGPVGPPGEKGEPGKPGPPGLPGAGG) constitute a Collagen-like domain. Over residues 78–95 (PGPPGPPGDPGPPGPVGP) the composition is skewed to pro residues. The region spanning 125–258 (TTVPRVAFYA…TFSGFIIYSD (134 aa)) is the C1q domain.

As to quaternary structure, interacts with ADGRB3. Forms heterooligomers with C1QL4, when proteins are coexpressed; this interaction does not occur after secretion. As to expression, expressed in brainstem.

The protein localises to the secreted. May regulate the number of excitatory synapses that are formed on hippocampus neurons. Has no effect on inhibitory synapses. This is C1q-related factor (C1QL1) from Homo sapiens (Human).